A 279-amino-acid chain; its full sequence is GTP cyclohydrolase MptA (279 aa).

Belongs to the GTP cyclohydrolase IV family. Homodimer. It depends on Fe(2+) as a cofactor.

The catalysed reaction is GTP + H2O = 7,8-dihydroneopterin 2',3'-cyclic phosphate + formate + diphosphate + H(+). Its pathway is cofactor biosynthesis; 5,6,7,8-tetrahydromethanopterin biosynthesis. In terms of biological role, converts GTP to 7,8-dihydro-D-neopterin 2',3'-cyclic phosphate, the first intermediate in the biosynthesis of coenzyme methanopterin. The sequence is that of GTP cyclohydrolase MptA from Korarchaeum cryptofilum (strain OPF8).